A 44-amino-acid polypeptide reads, in one-letter code: Protein PsbN (44 aa).

Residues 6 to 26 (FFYGVFLWCLLISVTGYSIYI) form a helical membrane-spanning segment.

This sequence belongs to the PsbN family.

It is found in the plastid. It localises to the chloroplast thylakoid membrane. In terms of biological role, may play a role in photosystem I and II biogenesis. This Ostreococcus tauri protein is Protein PsbN.